A 574-amino-acid chain; its full sequence is Isocitrate dehydrogenase kinase/phosphatase (574 aa).

ATP is bound by residues 315 to 321 and K336; that span reads APGIRGM. D371 is an active-site residue.

This sequence belongs to the AceK family.

It localises to the cytoplasm. It carries out the reaction L-seryl-[isocitrate dehydrogenase] + ATP = O-phospho-L-seryl-[isocitrate dehydrogenase] + ADP + H(+). Its function is as follows. Bifunctional enzyme which can phosphorylate or dephosphorylate isocitrate dehydrogenase (IDH) on a specific serine residue. This is a regulatory mechanism which enables bacteria to bypass the Krebs cycle via the glyoxylate shunt in response to the source of carbon. When bacteria are grown on glucose, IDH is fully active and unphosphorylated, but when grown on acetate or ethanol, the activity of IDH declines drastically concomitant with its phosphorylation. The polypeptide is Isocitrate dehydrogenase kinase/phosphatase (Escherichia coli O81 (strain ED1a)).